Consider the following 439-residue polypeptide: Histidine--tRNA ligase (439 aa).

Belongs to the class-II aminoacyl-tRNA synthetase family. As to quaternary structure, homodimer.

Its subcellular location is the cytoplasm. It catalyses the reaction tRNA(His) + L-histidine + ATP = L-histidyl-tRNA(His) + AMP + diphosphate + H(+). The chain is Histidine--tRNA ligase from Clostridium tetani (strain Massachusetts / E88).